The primary structure comprises 731 residues: Fatty acid oxidation complex subunit alpha (731 aa).

An enoyl-CoA hydratase region spans residues 15–204 (TEKTSAFSLT…RQGLVDEAVP (190 aa)). The 3-hydroxyacyl-CoA dehydrogenase stretch occupies residues 320–729 (KPIHRVGILG…FYPPADKDNS (410 aa)).

The protein in the N-terminal section; belongs to the enoyl-CoA hydratase/isomerase family. This sequence in the central section; belongs to the 3-hydroxyacyl-CoA dehydrogenase family. In terms of assembly, heterotetramer of two alpha chains (FadJ) and two beta chains (FadI).

The protein resides in the cytoplasm. The catalysed reaction is a (3S)-3-hydroxyacyl-CoA = a (2E)-enoyl-CoA + H2O. It catalyses the reaction a 4-saturated-(3S)-3-hydroxyacyl-CoA = a (3E)-enoyl-CoA + H2O. The enzyme catalyses a (3S)-3-hydroxyacyl-CoA + NAD(+) = a 3-oxoacyl-CoA + NADH + H(+). It carries out the reaction (3S)-3-hydroxybutanoyl-CoA = (3R)-3-hydroxybutanoyl-CoA. It participates in lipid metabolism; fatty acid beta-oxidation. Its function is as follows. Catalyzes the formation of a hydroxyacyl-CoA by addition of water on enoyl-CoA. Also exhibits 3-hydroxyacyl-CoA epimerase and 3-hydroxyacyl-CoA dehydrogenase activities. In Pectobacterium atrosepticum (strain SCRI 1043 / ATCC BAA-672) (Erwinia carotovora subsp. atroseptica), this protein is Fatty acid oxidation complex subunit alpha.